The primary structure comprises 1196 residues: Calcium-activated potassium channel subunit alpha-1 (1196 aa).

Over 1-52 the chain is Extracellular; sequence MATWNASQIILNSMSNIIESPQSKPRPVMASNGASLFIPVTMEVPCDQGTRM. A helical transmembrane segment spans residues 53-73; that stretch reads WWAFLASSMVTFFGGLFIILV. The Cytoplasmic portion of the chain corresponds to 74–146; sequence WRTFKYLWTV…MISAQTLTGR (73 aa). The chain crosses the membrane as a helical span at residues 147–167; that stretch reads VLVVTVFALSIGALMIYFIDS. Over 168-182 the chain is Extracellular; the sequence is SNPIESCQNFYKDFT. A helical transmembrane segment spans residues 183–203; that stretch reads LQIDMAFNIFFLLYFGLRFIA. Topologically, residues 204–207 are cytoplasmic; it reads ANDK. Residues 208 to 228 traverse the membrane as a helical segment; it reads LWFWLEVNSVVDFFTVPPVFV. The Extracellular portion of the chain corresponds to 229–232; the sequence is SVYL. The helical; Voltage-sensor transmembrane segment at 233-253 threads the bilayer; sequence NRSWLGLRFLRALRLIQFSEI. Topologically, residues 254–268 are cytoplasmic; sequence LQFLNILKTSNSIKL. A helical membrane pass occupies residues 269 to 289; it reads VNLCSIFISTWLTAAGFIHLV. The Extracellular segment spans residues 290–303; sequence ENSGDPWRNFENSQ. Residues 304–326 constitute an intramembrane region (pore-forming); sequence DLSYWECMYLLMVTMSTVGYGDV. Residues 320 to 323 carry the Selectivity for potassium motif; that stretch reads TVGY. The Extracellular segment spans residues 327-335; the sequence is YAKTTLGRL. Residues 336 to 356 traverse the membrane as a helical segment; that stretch reads FMVFFILGGLAMFASYVPEII. The Cytoplasmic portion of the chain corresponds to 357–1196; that stretch reads ELIGNRKKYG…PPIREVEDEC (840 aa). Positions 375–517 constitute an RCK N-terminal 1 domain; the sequence is RKHIVVCGHI…WNWKDGDDAI (143 aa). 3 residues coordinate Mg(2+): Glu407, Gln430, and Glu432. The segment S7 stretch occupies residues 524-544; the sequence is LGFIAQSCLAQGLSTMLANLF. The segment at 581-601 is segment S8; the sequence is LSFPAVCELCFVKLKLLMIAI. The interval 645–649 is heme-binding motif; the sequence is CKACH. The segment at 672–697 is disordered; it reads SALSPKKKQRNGGMRHSPNTSPNMMR. Residues 748 to 768 are segment S9; that stretch reads VLSGHVVVCIFGDMTSALIGV. Residues 750–894 form the RCK N-terminal 2 domain; that stretch reads SGHVVVCIFG…MERSSPDNSP (145 aa). Positions 914 to 936 match the Calcium bowl motif; sequence TELVNDSNVQFLDQDDDDDPDTE. The Ca(2+) site is built by Gln923, Asp926, Asp929, and Asp931. The segment at 943-963 is segment S10; sequence FACGTAFAVSVLDSLMSATYF. Positions 1098–1119 are enriched in low complexity; it reads ASLSHSSHSSHSSSKKSSSVTS. Positions 1098 to 1149 are disordered; sequence ASLSHSSHSSHSSSKKSSSVTSILHTASANRQNRVKARDSRDKQKMGQAEKK. Residues 1120 to 1129 show a composition bias toward polar residues; it reads ILHTASANRQ. Over residues 1133–1149 the composition is skewed to basic and acidic residues; that stretch reads KARDSRDKQKMGQAEKK.

The protein belongs to the potassium channel family. Calcium-activated (TC 1.A.1.3) subfamily. KCa1.1/KCNMA1 sub-subfamily. As to quaternary structure, homotetramer; which constitutes the calcium-activated potassium channel. In terms of tissue distribution, expressed in both the somites and neural tube of 1 day embryos. Within the nervous system, it is restricted to dorsal parts, and expressed centrally in regions dedicated to processing of sensory information. Six hours later, it is expressed segmentally within the somites. At this time, it is expressed in a primary sensory organ, the trigeminal ganglion. By 2 days, it is also expressed in other primary sensory organs, such as the otic vesicle, and the eye. Within the retina, it is expressed to an internal layer. In the developing otic vesicle, it is abundantly expressed near the apical surface. Isoform 3 is neural-specific, and is only expressed during late stages of neuronal differentiation.

It is found in the cell membrane. The catalysed reaction is K(+)(in) = K(+)(out). With respect to regulation, ethanol and carbon monoxide-bound heme increase channel activation. Heme inhibits channel activation. In terms of biological role, potassium channel activated by both membrane depolarization or increase in cytosolic Ca(2+) that mediates export of K(+). It is also activated by the concentration of cytosolic Mg(2+). Its activation dampens the excitatory events that elevate the cytosolic Ca(2+) concentration and/or depolarize the cell membrane. It therefore contributes to repolarization of the membrane potential. Plays a key role in controlling excitability in a number of systems, such as regulation of the contraction of smooth muscle, the tuning of hair cells in the cochlea, regulation of transmitter release, and innate immunity. In smooth muscles, its activation by high level of Ca(2+), caused by ryanodine receptors in the sarcoplasmic reticulum, regulates the membrane potential. In cochlea cells, its number and kinetic properties partly determine the characteristic frequency of each hair cell and thereby helps to establish a tonotopic map. Highly sensitive to both iberiotoxin (IbTx) and charybdotoxin (CTX). In Xenopus laevis (African clawed frog), this protein is Calcium-activated potassium channel subunit alpha-1 (kcnma1).